A 160-amino-acid chain; its full sequence is Crossover junction endodeoxyribonuclease RuvC (160 aa).

Residues D9, E68, and D141 contribute to the active site. The Mg(2+) site is built by D9, E68, and D141.

This sequence belongs to the RuvC family. In terms of assembly, homodimer which binds Holliday junction (HJ) DNA. The HJ becomes 2-fold symmetrical on binding to RuvC with unstacked arms; it has a different conformation from HJ DNA in complex with RuvA. In the full resolvosome a probable DNA-RuvA(4)-RuvB(12)-RuvC(2) complex forms which resolves the HJ. Requires Mg(2+) as cofactor.

It is found in the cytoplasm. It catalyses the reaction Endonucleolytic cleavage at a junction such as a reciprocal single-stranded crossover between two homologous DNA duplexes (Holliday junction).. In terms of biological role, the RuvA-RuvB-RuvC complex processes Holliday junction (HJ) DNA during genetic recombination and DNA repair. Endonuclease that resolves HJ intermediates. Cleaves cruciform DNA by making single-stranded nicks across the HJ at symmetrical positions within the homologous arms, yielding a 5'-phosphate and a 3'-hydroxyl group; requires a central core of homology in the junction. The consensus cleavage sequence is 5'-(A/T)TT(C/G)-3'. Cleavage occurs on the 3'-side of the TT dinucleotide at the point of strand exchange. HJ branch migration catalyzed by RuvA-RuvB allows RuvC to scan DNA until it finds its consensus sequence, where it cleaves and resolves the cruciform DNA. This is Crossover junction endodeoxyribonuclease RuvC from Campylobacter jejuni subsp. jejuni serotype O:23/36 (strain 81-176).